The primary structure comprises 299 residues: Homoserine O-acetyltransferase (299 aa).

Residue cysteine 142 is the Acyl-thioester intermediate of the active site. 2 residues coordinate substrate: lysine 163 and serine 192. Histidine 235 functions as the Proton acceptor in the catalytic mechanism. Glutamate 237 is an active-site residue. Arginine 249 contributes to the substrate binding site.

The protein belongs to the MetA family.

The protein resides in the cytoplasm. The catalysed reaction is L-homoserine + acetyl-CoA = O-acetyl-L-homoserine + CoA. Its pathway is amino-acid biosynthesis; L-methionine biosynthesis via de novo pathway; O-acetyl-L-homoserine from L-homoserine: step 1/1. In terms of biological role, transfers an acetyl group from acetyl-CoA to L-homoserine, forming acetyl-L-homoserine. The protein is Homoserine O-acetyltransferase of Synechococcus sp. (strain ATCC 27144 / PCC 6301 / SAUG 1402/1) (Anacystis nidulans).